The chain runs to 143 residues: Cofilin/actin-depolymerizing factor homolog 2 (143 aa).

Positions G4–L141 constitute an ADF-H domain.

It belongs to the actin-binding proteins ADF family. In terms of assembly, interacts with monomeric actin, does not bind to actin polymers.

The protein localises to the cytoplasm. Its subcellular location is the cytoskeleton. Not involved in actin polymerisation, instead functions to stimulate nucleotide exchange on monomeric actin and influence turnover of the small amount of cytosolic actin microfilaments. Essential for erythrocytic schizogony. The sequence is that of Cofilin/actin-depolymerizing factor homolog 2 from Plasmodium falciparum (isolate 3D7).